Reading from the N-terminus, the 114-residue chain is uncharacterized protein (114 aa).

A disordered region spans residues 1–37 (MLKKILSLFKKEEPKTEEKPTEVEEKKEEREEKEEKK). Residues 9–37 (FKKEEPKTEEKPTEVEEKKEEREEKEEKK) are compositionally biased toward basic and acidic residues.

This is an uncharacterized protein from Aquifex aeolicus (strain VF5).